The primary structure comprises 833 residues: MTRSPFRRLVFGTLRRLLYLWVRSETINQSSFTLNLDRSRPVFYALQSPSISDLAVIDTECRKAGLPRPVLSVAVGNLIEPAAFFYLTPSPDWLGRQDKRGAPPTLERVVAAVSQNPGEDAQIIPVSVFWGQSPDRESSAWKLLFADSWAVTGRLRRLVSILILGRKTRVQFSAPIHMRELVGENKGYELTLRMTQRLLRVHFRNLKSAVIGPDVSHRRTVVKGLLDEPLVKQAIIEEAEREHITQEKARERALSYGNEIASDYTYSVIRFMEVVLSWFWNKIYDGIKVSHIEGVQEVAPGHEVIYVPCHRSHIDYLLLSYLLFRNGLTPPHIAAGINLNMPVVGGLLRRGGAFFMRRTFKGNPLYTAVFTEYLHTLFIKGFPVEYFVEGGRSRTGRMLQPKTGMLAITLRSFLRNSRMPIVFIPVYIGYERVLEGRTYLGELRGATKKKESIFDIFKVIGALKQRFGQVSVNFGAPIKLAEFLDGEQPDWREQQLDPQFRPEWLSETTHRLGERVAQHLNEAAAVNPMNLVAVALLSTQRLALDDQAMERVLDLYLTLLRAVPYSPHTTLPEGDGRSLIEHVKGMDLLAEQKDALGKILYLNEQNAVLMTYYRNNVLHIFALPSLLASFFQSSSRMTREQILRYTRALYPFLQSELFIRWPLNELDDVVDQWLAAFVEQGLLRFKKDAYVRPEPSSREFVLLTLLSRAIAQTLQRFYMAIALLLNSGQNTLSPEQLEDLCTVMAQRLSILHGLNAPEFFDKSLFRHFIQTLLDLGVLRKDSAGKLSYHPMLGELAEGAAKRVLPAEIRLSIRQVALHSNEEEQDVGTDQGAA.

The HXXXXD motif motif lies at 309 to 314 (CHRSHI).

Belongs to the GPAT/DAPAT family.

It localises to the cell inner membrane. The enzyme catalyses sn-glycerol 3-phosphate + an acyl-CoA = a 1-acyl-sn-glycero-3-phosphate + CoA. The protein operates within phospholipid metabolism; CDP-diacylglycerol biosynthesis; CDP-diacylglycerol from sn-glycerol 3-phosphate: step 1/3. This chain is Glycerol-3-phosphate acyltransferase, found in Pseudomonas syringae pv. syringae (strain B728a).